Reading from the N-terminus, the 258-residue chain is Phosphate import ATP-binding protein PstB 1 (258 aa).

An ABC transporter domain is found at 5-247 (LDLTDVNIYY…EKIFSNPNQK (243 aa)). Residue 37–44 (GPSGCGKT) participates in ATP binding.

The protein belongs to the ABC transporter superfamily. Phosphate importer (TC 3.A.1.7) family. As to quaternary structure, the complex is composed of two ATP-binding proteins (PstB), two transmembrane proteins (PstC and PstA) and a solute-binding protein (PstS).

It is found in the cell membrane. It catalyses the reaction phosphate(out) + ATP + H2O = ADP + 2 phosphate(in) + H(+). In terms of biological role, part of the ABC transporter complex PstSACB involved in phosphate import. Responsible for energy coupling to the transport system. This Mycobacterium tuberculosis (strain CDC 1551 / Oshkosh) protein is Phosphate import ATP-binding protein PstB 1.